The chain runs to 596 residues: Fumarate reductase (cytochrome) (596 aa).

The signal sequence occupies residues 1–25 (MKKMNLAVCIATLMGTAGLMGTAVA). Residues His-33, Cys-39, Cys-42, His-43, Cys-61, Cys-64, His-65, His-83, His-86, Cys-93, Cys-96, His-97, Ala-99, His-100, Cys-107, Cys-110, and His-111 each coordinate heme c. Positions 143 to 596 (ALASAPHDTV…EEAAKYSKKN (454 aa)) are flavoprotein-like. Positions 162, 181, 189, 194, 195, 196, 303, and 369 each coordinate FAD. Residue Gly-195 participates in fumarate binding. Gly-195 is a binding site for succinate. Tyr-386 lines the heme c pocket. Residues His-390, Thr-402, and Glu-403 each contribute to the succinate site. Positions 402 and 403 each coordinate fumarate. The Proton donor role is filled by Arg-427. His-529 provides a ligand contact to fumarate. His-529 lines the succinate pocket. FAD-binding residues include His-530 and Glu-559. Residues Arg-569 and Gly-572 each contribute to the fumarate site. Arg-569 and Gly-572 together coordinate succinate. 2 residues coordinate FAD: Ala-574 and Ile-575.

The protein in the C-terminal section; belongs to the FAD-dependent oxidoreductase 2 family. FRD/SDH subfamily. As to quaternary structure, monomer. It depends on FAD as a cofactor. Requires heme c as cofactor.

The protein resides in the periplasm. It carries out the reaction 2 Fe(III)-[cytochrome c] + succinate = fumarate + 2 Fe(II)-[cytochrome c] + 2 H(+). With respect to regulation, mesaconic acid is a competitive inhibitor of fumarate reduction. Its function is as follows. Flavocytochrome that catalyzes the reduction of fumarate to succinate. Is essential for fumarate respiration during anaerobic growth, acting as the terminal reductase. Receives electrons from the membrane-bound tetraheme c-type cytochrome CymA. Is essentially unidirectional, catalyzing only fumarate reduction. Cannot reduce nitrite, dimethylsulphoxide, trimethylamine-N-oxide (TMAO) or sulfite. In vitro, can use the artificial electron donor methyl viologen. The polypeptide is Fumarate reductase (cytochrome) (Shewanella frigidimarina (strain NCIMB 400)).